Reading from the N-terminus, the 92-residue chain is Large ribosomal subunit protein eL43 (92 aa).

A C4-type zinc finger spans residues 39–60; sequence CEFCGKFAVKRKAVGIWGCKDC.

It belongs to the eukaryotic ribosomal protein eL43 family.

In Pseudotsuga menziesii (Douglas-fir), this protein is Large ribosomal subunit protein eL43 (RPL37A).